The primary structure comprises 501 residues: Splicing factor 3A subunit 3 (501 aa).

Position 1 is an N-acetylmethionine (Met-1). Phosphoserine occurs at positions 54 and 121. A Nuclear localization signal motif is present at residues 175–179 (KERKN). 2 positions are modified to phosphoserine: Ser-295 and Ser-299. The span at 343–354 (ENVQRKQARTGE) shows a compositional bias: basic and acidic residues. The segment at 343-374 (ENVQRKQARTGEEREEEEEEQISESESEDEEN) is disordered. Residues 355–374 (EREEEEEEQISESESEDEEN) are compositionally biased toward acidic residues. Phosphoserine is present on residues Ser-365, Ser-367, and Ser-369. The Matrin-type zinc finger occupies 406-437 (YNCEICGNYTYRGPKAFQRHFAEWRHAHGMRC). Thr-475 is subject to Phosphothreonine.

The protein belongs to the SF3A3 family. In terms of assembly, component of the 17S U2 SnRNP complex, a ribonucleoprotein complex that contains small nuclear RNA (snRNA) U2 and a number of specific proteins. Part of the SF3A subcomplex of the 17S U2 SnRNP complex which is composed of three subunits; SF3A3/SAP61, SF3A2/SAP62 and SF3A1/SAP114. SF3A associates with the splicing factor SF3B and a 12S RNA unit to form the mature 17S U2 small nuclear ribonucleoprotein complex (17S U2 snRNP). Identified in the spliceosome 'E' complex, a precursor of the spliceosome 'A' complex. Identified in the spliceosome 'A' and 'B' complexes. Identified in the spliceosome 'C' complex. In terms of tissue distribution, ubiquitous.

The protein resides in the nucleus speckle. It is found in the nucleus. Component of the 17S U2 SnRNP complex of the spliceosome, a large ribonucleoprotein complex that removes introns from transcribed pre-mRNAs. The 17S U2 SnRNP complex (1) directly participates in early spliceosome assembly and (2) mediates recognition of the intron branch site during pre-mRNA splicing by promoting the selection of the pre-mRNA branch-site adenosine, the nucleophile for the first step of splicing. Within the 17S U2 SnRNP complex, SF3A3 is part of the SF3A subcomplex that contributes to the assembly of the 17S U2 snRNP, and the subsequent assembly of the pre-spliceosome 'E' complex and the pre-catalytic spliceosome 'A' complex. Involved in pre-mRNA splicing as a component of pre-catalytic spliceosome 'B' complexes. The sequence is that of Splicing factor 3A subunit 3 (SF3A3) from Homo sapiens (Human).